A 709-amino-acid polypeptide reads, in one-letter code: Solute carrier organic anion transporter family member 2B1 (709 aa).

The interval 1–38 (MGPRIGPAGEVPQVPDKETKATMGTENTPGGKASPDPQ) is disordered. Topologically, residues 1-49 (MGPRIGPAGEVPQVPDKETKATMGTENTPGGKASPDPQDVRPSVFHNIK) are cytoplasmic. Ser34 is modified (phosphoserine). A helical transmembrane segment spans residues 50 to 69 (LFVLCHSLLQLAQLMISGYL). The segment at 51 to 69 (FVLCHSLLQLAQLMISGYL) is required for E1S and taurocholate transport; required for transporter stability. The Extracellular segment spans residues 70-88 (KSSISTVEKRFGLSSQTSG). The chain crosses the membrane as a helical span at residues 89 to 109 (LLASFNEVGNTALIVFVSYFG). Over 110–115 (SRVHRP) the chain is Cytoplasmic. Residues 116–140 (RMIGYGAILVALAGLLMTLPHFISE) form a helical membrane-spanning segment. At 141 to 185 (PYRYDNTSPEDMPQDFKASLCLPTTSAPASAPSNGNCSSYTETQH) the chain is on the extracellular side. N-linked (GlcNAc...) asparagine glycosylation occurs at Asn176. A helical membrane pass occupies residues 186-215 (LSVVGIMFVAQTLLGVGGVPIQPFGISYID). Residues 216–234 (DFAHNSNSPLYLGILFAVT) are Cytoplasmic-facing. Residues 235-255 (MMGPGLAFGLGSLMLRLYVDI) traverse the membrane as a helical segment. Residues 256-273 (NQMPEGGISLTIKDPRWV) lie on the Extracellular side of the membrane. A helical transmembrane segment spans residues 274 to 298 (GAWWLGFLIAAGAVALAAIPYFFFP). Residues 299 to 366 (KEMPKEKREL…IKVFPRVLLQ (68 aa)) lie on the Cytoplasmic side of the membrane. The residue at position 318 (Thr318) is a Phosphothreonine. Residues 319–342 (DSPARKGKDSPSKQSPGESTKKQD) are disordered. Position 320 is a phosphoserine (Ser320). The chain crosses the membrane as a helical span at residues 367–388 (TLRHPIFLLVVLSQVCLSSMAA). Residues 389-408 (GMATFLPKFLERQFSITASY) are Extracellular-facing. A helical transmembrane segment spans residues 409-432 (ANLLIGCLSFPSVIVGIVVGGVLV). The Cytoplasmic portion of the chain corresponds to 433–436 (KRLH). A helical membrane pass occupies residues 437–460 (LGPVGCGALCLLGMLLCLFFSLPL). Residues 461–564 (FFIGCSSHQI…STCSHLVVPF (104 aa)) are Extracellular-facing. One can recognise a Kazal-like domain in the interval 483–543 (LELSPSCMEA…VFYTNCSCVV (61 aa)). 3 disulfide bridges follow: Cys489–Cys520, Cys495–Cys516, and Cys504–Cys541. An N-linked (GlcNAc...) asparagine glycan is attached at Asn538. Residues 565 to 587 (LLLVSLGSALACLTHTPSFMLIL) form a helical membrane-spanning segment. At 588-596 (RGVKKEDKT) the chain is on the cytoplasmic side. Residues 597–622 (LAVGIQFMFLRILAWMPSPVIHGSAI) traverse the membrane as a helical segment. Residues 623-655 (DTTCVHWALSCGRRAVCRYYNNDLLRNRFIGLQ) are Extracellular-facing. Residues 656–673 (FFFKTGSVICFALVLAVL) form a helical membrane-spanning segment. The Cytoplasmic segment spans residues 674–709 (RQQDKEARTKESRSSPAVEQQLLVSGPGKKPEDSRV). The disordered stretch occupies residues 679–709 (EARTKESRSSPAVEQQLLVSGPGKKPEDSRV).

It belongs to the organo anion transporter (TC 2.A.60) family. In terms of tissue distribution, strongly expressed in the liver, at the sinusoidal membrane of the hepatocytes. Expressed in the kidney. Expressed in placental trophoblasts and syncytiotrophoblast. Expressed in the small intestine. Expressed in the blood-brain barrier, in endothelial cells of brain capillaries. Expressed in the retina, in the inner nuclear layer and the inner plexiform layer. Expressed in skelettal muscles. In testis, primarily localized to the basal membrane of Sertoli cells and weakly expressed within the tubules. Also expressed in pancreas, lung, heart, colon, ovary and spleen. Expressed in fetal brain, heart, kidney, liver, lung, skeletal muscle, spleen and pancreas. Highest expression in brain. Predominant isoform compared to isoform 3 in small intestine duodenum, kidney, placenta, and skeletal muscle. As to expression, predominant isoform compared to isoform 1 in liver. Also expressed in small intestine duodenum, kidney, brain, placenta, and skeletal muscle.

It localises to the cell membrane. Its subcellular location is the basal cell membrane. It is found in the basolateral cell membrane. The protein localises to the apical cell membrane. The enzyme catalyses dehydroepiandrosterone 3-sulfate(out) = dehydroepiandrosterone 3-sulfate(in). The catalysed reaction is estrone 3-sulfate(out) = estrone 3-sulfate(in). It catalyses the reaction estrone 3-sulfate(out) + hydrogencarbonate(in) = estrone 3-sulfate(in) + hydrogencarbonate(out). It carries out the reaction taurocholate(out) = taurocholate(in). The enzyme catalyses coproporphyrin III(out) = coproporphyrin III(in). The catalysed reaction is substance P(out) = substance P(in). It catalyses the reaction pregnenolone sulfate(out) = pregnenolone sulfate(in). It carries out the reaction prostaglandin E2(out) = prostaglandin E2(in). The enzyme catalyses prostaglandin D2(out) = prostaglandin D2(in). The catalysed reaction is L-thyroxine(out) = L-thyroxine(in). With respect to regulation, E1S, DHEA-S and PregS transports are regulated by steroid hormones. In the case of testosterone, transport of E1S and DHEA-S was inhibited, whereas progesterone stimulated E1S, DHEA-S and PregS uptake. Progesterone stimulates high-affinity uptake of E1S whereas it inhibits low-affinity uptake of E1S. Progesterone doesn't affect the uptake of PGE2. Its function is as follows. Mediates the Na(+)-independent transport of steroid sulfate conjugates and other specific organic anions. Responsible for the transport of estrone 3-sulfate (E1S) through the basal membrane of syncytiotrophoblast, highlighting a potential role in the placental absorption of fetal-derived sulfated steroids including the steroid hormone precursor dehydroepiandrosterone sulfate (DHEA-S). Also facilitates the uptake of sulfated steroids at the basal/sinusoidal membrane of hepatocytes, therefore accounting for the major part of organic anions clearance of liver. Mediates the intestinal uptake of sulfated steroids. Mediates the uptake of the neurosteroids DHEA-S and pregnenolone sulfate (PregS) into the endothelial cells of the blood-brain barrier as the first step to enter the brain. Also plays a role in the reuptake of neuropeptides such as substance P/TAC1 and vasoactive intestinal peptide/VIP released from retinal neurons. May act as a heme transporter that promotes cellular iron availability via heme oxygenase/HMOX2 and independently of TFRC. Also transports heme by-product coproporphyrin III (CPIII), and may be involved in their hepatic disposition. Mediates the uptake of other substrates such as prostaglandins D2 (PGD2), E1 (PGE1) and E2 (PGE2), taurocholate, L-thyroxine, leukotriene C4 and thromboxane B2. May contribute to regulate the transport of organic compounds in testis across the blood-testis-barrier. Shows a pH-sensitive substrate specificity which may be ascribed to the protonation state of the binding site and leads to a stimulation of substrate transport in an acidic microenvironment. The exact transport mechanism has not been yet deciphered but most likely involves an anion exchange, coupling the cellular uptake of organic substrate with the efflux of an anionic compound. Hydrogencarbonate/HCO3(-) acts as a probable counteranion that exchanges for organic anions. Cytoplasmic glutamate may also act as counteranion in the placenta. An inwardly directed proton gradient has also been proposed as the driving force of E1S uptake with a (H(+):E1S) stoichiometry of (1:1). Has estrone 3-sulfate (E1S) transport activity comparable with the full-length isoform 1. This is Solute carrier organic anion transporter family member 2B1 from Homo sapiens (Human).